Consider the following 513-residue polypeptide: Serine/threonine-protein kinase ppk8 (513 aa).

Over residues 98 to 114 (LSSTLTSMSEESSSTES) the composition is skewed to low complexity. A disordered region spans residues 98 to 120 (LSSTLTSMSEESSSTESKFATLN). Residues 241–505 (GKLNNVIGEG…ISGARSTTWM (265 aa)) form the Protein kinase domain. Residues 247-255 (IGEGASSFI) and Lys270 contribute to the ATP site. Asp364 functions as the Proton acceptor in the catalytic mechanism.

This sequence belongs to the protein kinase superfamily. Ser/Thr protein kinase family.

Its subcellular location is the cytoplasm. The protein localises to the nucleus. The catalysed reaction is L-seryl-[protein] + ATP = O-phospho-L-seryl-[protein] + ADP + H(+). The enzyme catalyses L-threonyl-[protein] + ATP = O-phospho-L-threonyl-[protein] + ADP + H(+). The sequence is that of Serine/threonine-protein kinase ppk8 (ppk8) from Schizosaccharomyces pombe (strain 972 / ATCC 24843) (Fission yeast).